A 193-amino-acid polypeptide reads, in one-letter code: Crossover junction endodeoxyribonuclease RuvC (193 aa).

Residues Asp-7, Glu-68, and Asp-141 contribute to the active site. Mg(2+) is bound by residues Asp-7, Glu-68, and Asp-141.

The protein belongs to the RuvC family. As to quaternary structure, homodimer which binds Holliday junction (HJ) DNA. The HJ becomes 2-fold symmetrical on binding to RuvC with unstacked arms; it has a different conformation from HJ DNA in complex with RuvA. In the full resolvosome a probable DNA-RuvA(4)-RuvB(12)-RuvC(2) complex forms which resolves the HJ. The cofactor is Mg(2+).

The protein localises to the cytoplasm. The enzyme catalyses Endonucleolytic cleavage at a junction such as a reciprocal single-stranded crossover between two homologous DNA duplexes (Holliday junction).. Functionally, the RuvA-RuvB-RuvC complex processes Holliday junction (HJ) DNA during genetic recombination and DNA repair. Endonuclease that resolves HJ intermediates. Cleaves cruciform DNA by making single-stranded nicks across the HJ at symmetrical positions within the homologous arms, yielding a 5'-phosphate and a 3'-hydroxyl group; requires a central core of homology in the junction. The consensus cleavage sequence is 5'-(A/T)TT(C/G)-3'. Cleavage occurs on the 3'-side of the TT dinucleotide at the point of strand exchange. HJ branch migration catalyzed by RuvA-RuvB allows RuvC to scan DNA until it finds its consensus sequence, where it cleaves and resolves the cruciform DNA. This chain is Crossover junction endodeoxyribonuclease RuvC, found in Renibacterium salmoninarum (strain ATCC 33209 / DSM 20767 / JCM 11484 / NBRC 15589 / NCIMB 2235).